Consider the following 432-residue polypeptide: Cyclic 2,3-diphosphoglycerate synthetase (432 aa).

The protein belongs to the cyclic 2,3-diphosphoglycerate synthetase family.

The protein localises to the cytoplasm. The enzyme catalyses (2R)-2,3-bisphosphoglycerate + ATP + H(+) = cyclic (2R)-2,3-bisphosphoglycerate + ADP + phosphate. In terms of biological role, catalyzes the formation of cyclic 2,3-diphosphoglycerate (cDPG) by formation of an intramolecular phosphoanhydride bond at the expense of ATP. This is Cyclic 2,3-diphosphoglycerate synthetase from Thermococcus onnurineus (strain NA1).